The chain runs to 429 residues: Ribosomal RNA small subunit methyltransferase B (429 aa).

S-adenosyl-L-methionine is bound by residues C254 to K260, D277, D303, and D322. C375 acts as the Nucleophile in catalysis.

This sequence belongs to the class I-like SAM-binding methyltransferase superfamily. RsmB/NOP family.

It localises to the cytoplasm. The catalysed reaction is cytidine(967) in 16S rRNA + S-adenosyl-L-methionine = 5-methylcytidine(967) in 16S rRNA + S-adenosyl-L-homocysteine + H(+). In terms of biological role, specifically methylates the cytosine at position 967 (m5C967) of 16S rRNA. In Pectobacterium carotovorum subsp. carotovorum (strain PC1), this protein is Ribosomal RNA small subunit methyltransferase B.